We begin with the raw amino-acid sequence, 294 residues long: Protein PET54 (294 aa).

Its subcellular location is the mitochondrion inner membrane. Its function is as follows. Activator of specific mitochondrial mRNAs. PET54 is involved in the excision of intron aI5-beta from pre-mRNA for cytochrome c oxidase I (COX1) and plays a role in promoting the translation of COX3. The sequence is that of Protein PET54 (PET54) from Saccharomyces bayanus (Yeast).